A 272-amino-acid polypeptide reads, in one-letter code: Putative G-protein coupled receptor GPR32P1 (272 aa).

Residues 1-24 (MNGVSEGTRGCSDRQPGALTQGHS) form a disordered region. Over 1 to 46 (MNGVSEGTRGCSDRQPGALTQGHSCSRKMNASRCLSEEVGSLRPLT) the chain is Extracellular. Residue Asn-30 is glycosylated (N-linked (GlcNAc...) asparagine). A helical transmembrane segment spans residues 47 to 67 (MAVLSASFVVGVLGNGLVPWV). The Cytoplasmic segment spans residues 68-78 (TVFRMARTVST). The chain crosses the membrane as a helical span at residues 79–99 (VCFFHLALADFMLSLSLPILV). Residues 100 to 116 (YYIVSRQWLLGEWACKL) are Extracellular-facing. A disulfide bond links Cys-114 and Cys-191. A helical transmembrane segment spans residues 117–137 (YTGFVFLTFSTSNCLLVLISV). At 138–158 (DRCISVLYPVWALNHRTEQRA) the chain is on the cytoplasmic side. A helical transmembrane segment spans residues 159 to 179 (SWLAFGVWLLAAALCSAHLKF). Residues 180–213 (RTTRKWNGCMQCYLQFNLENETAQMWTQEVFGRQ) lie on the Extracellular side of the membrane. Asn-199 carries N-linked (GlcNAc...) asparagine glycosylation. The helical transmembrane segment at 214–234 (MAVIMAHFLLGFLGPLAIIGT) threads the bilayer. Over 235–272 (CAHLIRAKLLREGWVHANRPKRLLLVLVSALSAGSHLT) the chain is Cytoplasmic.

The protein belongs to the G-protein coupled receptor 1 family.

The protein resides in the cell membrane. Its function is as follows. Orphan receptor. The polypeptide is Putative G-protein coupled receptor GPR32P1 (GPR32P1) (Homo sapiens (Human)).